Here is a 269-residue protein sequence, read N- to C-terminus: Phosphatidylglycerol--prolipoprotein diacylglyceryl transferase (269 aa).

Transmembrane regions (helical) follow at residues 14–34 (IVQI…AGII), 49–69 (VAPE…IPMA), 89–109 (VFAI…GLLA), and 118–138 (GYSL…GQAI). A 1,2-diacyl-sn-glycero-3-phospho-(1'-sn-glycerol) is bound at residue R140. 3 consecutive transmembrane segments (helical) span residues 180–200 (TFLY…FVFF), 208–228 (GSIA…IEGL), and 240–260 (TAQL…WWLN).

Belongs to the Lgt family.

It is found in the cell inner membrane. The enzyme catalyses L-cysteinyl-[prolipoprotein] + a 1,2-diacyl-sn-glycero-3-phospho-(1'-sn-glycerol) = an S-1,2-diacyl-sn-glyceryl-L-cysteinyl-[prolipoprotein] + sn-glycerol 1-phosphate + H(+). Its pathway is protein modification; lipoprotein biosynthesis (diacylglyceryl transfer). Its function is as follows. Catalyzes the transfer of the diacylglyceryl group from phosphatidylglycerol to the sulfhydryl group of the N-terminal cysteine of a prolipoprotein, the first step in the formation of mature lipoproteins. The chain is Phosphatidylglycerol--prolipoprotein diacylglyceryl transferase from Gloeobacter violaceus (strain ATCC 29082 / PCC 7421).